The sequence spans 377 residues: MTDIKQILTDLIRFPSITPEDAGCQKYMIQFLEQLGFTCQQLNNGPVSNFFACYGKIGPLLVFAGHTDVVPVGEVSKWDTDPFSLEEKNGVLYGRGVADMKGSLACMLHMARRFIKTYPSFPGRLGFLITSGEEGDEFNLGTPYVMQKLEQQGIVIDYCIVGEPSSSLKAGDIIKIGRRGSLSAKIHLSGKQGHVAYPHLADNPIHRISPVLAELTSMQWDNGNAYFPPTSMQITYIHCGGHAGNIIPGELNLHLNFRYSTEQTDESLKTRVINAFTHHNLNPAIEWRLNGEPFLTNKGILLESCKQTVLEHIGTLPELSTSGGTSDGRFIAPYGVEVIELGLVNATIHQVNECTSLQDLNTLETMYFSICEKLLID.

H66 contributes to the Zn(2+) binding site. The active site involves D68. D99 lines the Zn(2+) pocket. E133 (proton acceptor) is an active-site residue. Residues E134, E163, and H349 each coordinate Zn(2+).

The protein belongs to the peptidase M20A family. DapE subfamily. In terms of assembly, homodimer. The cofactor is Zn(2+). It depends on Co(2+) as a cofactor.

The enzyme catalyses N-succinyl-(2S,6S)-2,6-diaminopimelate + H2O = (2S,6S)-2,6-diaminopimelate + succinate. It participates in amino-acid biosynthesis; L-lysine biosynthesis via DAP pathway; LL-2,6-diaminopimelate from (S)-tetrahydrodipicolinate (succinylase route): step 3/3. Catalyzes the hydrolysis of N-succinyl-L,L-diaminopimelic acid (SDAP), forming succinate and LL-2,6-diaminopimelate (DAP), an intermediate involved in the bacterial biosynthesis of lysine and meso-diaminopimelic acid, an essential component of bacterial cell walls. In Legionella pneumophila (strain Corby), this protein is Succinyl-diaminopimelate desuccinylase.